We begin with the raw amino-acid sequence, 304 residues long: Ribonuclease Z (304 aa).

Residues H61, H63, D65, H66, H138, D206, and H265 each contribute to the Zn(2+) site. D65 acts as the Proton acceptor in catalysis.

This sequence belongs to the RNase Z family. As to quaternary structure, homodimer. Zn(2+) serves as cofactor.

The enzyme catalyses Endonucleolytic cleavage of RNA, removing extra 3' nucleotides from tRNA precursor, generating 3' termini of tRNAs. A 3'-hydroxy group is left at the tRNA terminus and a 5'-phosphoryl group is left at the trailer molecule.. Its function is as follows. Zinc phosphodiesterase, which displays some tRNA 3'-processing endonuclease activity. Probably involved in tRNA maturation, by removing a 3'-trailer from precursor tRNA. This Lachnospira eligens (strain ATCC 27750 / DSM 3376 / VPI C15-48 / C15-B4) (Eubacterium eligens) protein is Ribonuclease Z.